The primary structure comprises 111 residues: uncharacterized protein (111 aa).

A disordered region spans residues 43 to 72 (NGRAEETEADAPLPEEPSLPDLPDLSDLDS). Low complexity predominate over residues 61–72 (LPDLPDLSDLDS).

This is an uncharacterized protein from Homo sapiens (Human).